The sequence spans 159 residues: ATP synthase subunit b 2 (159 aa).

The chain crosses the membrane as a helical span at residues 1-21 (MDATFWAFIALVIFVAIVVYM).

The protein belongs to the ATPase B chain family. F-type ATPases have 2 components, F(1) - the catalytic core - and F(0) - the membrane proton channel. F(1) has five subunits: alpha(3), beta(3), gamma(1), delta(1), epsilon(1). F(0) has three main subunits: a(1), b(2) and c(10-14). The alpha and beta chains form an alternating ring which encloses part of the gamma chain. F(1) is attached to F(0) by a central stalk formed by the gamma and epsilon chains, while a peripheral stalk is formed by the delta and b chains.

The protein resides in the cell inner membrane. Functionally, f(1)F(0) ATP synthase produces ATP from ADP in the presence of a proton or sodium gradient. F-type ATPases consist of two structural domains, F(1) containing the extramembraneous catalytic core and F(0) containing the membrane proton channel, linked together by a central stalk and a peripheral stalk. During catalysis, ATP synthesis in the catalytic domain of F(1) is coupled via a rotary mechanism of the central stalk subunits to proton translocation. Its function is as follows. Component of the F(0) channel, it forms part of the peripheral stalk, linking F(1) to F(0). This chain is ATP synthase subunit b 2, found in Brucella ovis (strain ATCC 25840 / 63/290 / NCTC 10512).